The chain runs to 206 residues: Probable glutathione S-transferase 7 (206 aa).

The GST N-terminal domain occupies 2 to 79 (VHYKVSYFPI…YLARQFGING (78 aa)). Glutathione is bound by residues Tyr8, Trp39, Lys43, 49 to 51 (GQL), and 63 to 64 (QS). Residues 81–206 (CAWEEAQVNS…WLETRPVTPF (126 aa)) enclose the GST C-terminal domain.

The protein belongs to the GST superfamily. Sigma family.

The enzyme catalyses RX + glutathione = an S-substituted glutathione + a halide anion + H(+). Its function is as follows. Conjugation of reduced glutathione to a wide number of exogenous and endogenous hydrophobic electrophiles. May play a role in the detoxification of reactive oxygen species produced during pathogenic bacterial infection. In Caenorhabditis elegans, this protein is Probable glutathione S-transferase 7 (gst-7).